The sequence spans 554 residues: MSPVLAGVLQLLALTAALALAHVPLGNYLARVYSSPKHLRIEKWIYKSIGADPDTEMRWPAYLRGVLAFSLAGVLFLYLLQRLQGVLPGSLGFASIDPDQAFNTAASFVANTNWQSYYGEQAMGHVVQTAGLAVQNFVSAAVGIAVAVALVRGFARSRTGELGNFWADLVRGVVRVLVPIAAVGAVILVACGVIQNFSGIHEVGQFMGGTQEWNGGAVASQEVIKELGTNGGGYFNANSAHPFENPTPFTNLFEIFLILLIPVALTRTFGIMTGSVRQGYAILGTMAAIWAGFVALMMWTEFAHHGPALQAAGGAMEGKELRFGIGGSSLFAVTTTLTSTGAVDSFHSSYTGLGGGITMLGMMLGEIAPGGVGSGLYGMLVMAVVAVFIAGLMVGRTPEYLGKKIGTREIKFAACYILITPALVLVFTAAAMALPTPGDSMTNSGAHGFSEILYAYTSASNNNGSAFAGLNADTQWFNSTLGLAMLLGRFVPMVFVLALAGSLARQQPVPATAGTLRTEKPLFAGLLAGAVLIITGLTYFPALALGPLAEGLAA.

Transmembrane regions (helical) follow at residues 3-23, 60-80, 131-151, 174-194, 252-272, 279-299, 323-343, 352-372, 375-395, 412-432, 481-501, and 522-542; these read PVLA…LAHV, PAYL…LYLL, GLAV…VALV, VRVL…CGVI, LFEI…FGIM, GYAI…LMMW, FGIG…TGAV, GLGG…PGGV, GLYG…LMVG, FAAC…AAAM, LGLA…ALAG, and LFAG…YFPA.

The protein belongs to the KdpA family. As to quaternary structure, the system is composed of three essential subunits: KdpA, KdpB and KdpC.

The protein resides in the cell membrane. In terms of biological role, part of the high-affinity ATP-driven potassium transport (or Kdp) system, which catalyzes the hydrolysis of ATP coupled with the electrogenic transport of potassium into the cytoplasm. This subunit binds the extracellular potassium ions and delivers the ions to the membrane domain of KdpB through an intramembrane tunnel. This is Potassium-transporting ATPase potassium-binding subunit from Streptomyces coelicolor (strain ATCC BAA-471 / A3(2) / M145).